A 122-amino-acid chain; its full sequence is MIQQETRLKVADNSGAREVLTIKVLGGSGRKTANIGDVIVCTVKQATPGGVVKKGEVVKAVIVRTKSGARRNDGSYISFDENACVIIRDDKSPRGTRIFGPVARELRDNNYMKIVSLAPEVL.

Belongs to the universal ribosomal protein uL14 family. In terms of assembly, part of the 50S ribosomal subunit. Forms a cluster with proteins L3 and L19. In the 70S ribosome, L14 and L19 interact and together make contacts with the 16S rRNA in bridges B5 and B8.

Its function is as follows. Binds to 23S rRNA. Forms part of two intersubunit bridges in the 70S ribosome. The sequence is that of Large ribosomal subunit protein uL14 from Bacillus pumilus (strain SAFR-032).